We begin with the raw amino-acid sequence, 99 residues long: Putative transmembrane protein ORF13 (99 aa).

3 consecutive transmembrane segments (helical) span residues 8–28 (IATFGIGDTVTTIIGLSMAGI), 42–62 (LGLFGIIAAKVLYFGLMYIIV), and 73–93 (GPITITVLGTLICLWNIAIIA).

It is found in the host membrane. In His1 virus (isolate Australia/Victoria) (His1V), this protein is Putative transmembrane protein ORF13.